Reading from the N-terminus, the 180-residue chain is UPF0227 protein YcfP (180 aa).

Belongs to the UPF0227 family.

The protein is UPF0227 protein YcfP of Escherichia coli O9:H4 (strain HS).